Here is a 125-residue protein sequence, read N- to C-terminus: Splicing factor 3B subunit 6 (125 aa).

An interaction with pre-mRNA branch site region spans residues 16–29 (EVNRILYIRNLPYK). One can recognise an RRM domain in the interval 19–94 (RILYIRNLPY…RYLVVLYYNA (76 aa)). Lys29 is subject to N6-acetyllysine; alternate. Lys29 is covalently cross-linked (Glycyl lysine isopeptide (Lys-Gly) (interchain with G-Cter in SUMO2); alternate). Position 41 is an N6-acetyllysine (Lys41).

In terms of assembly, component of the 17S U2 SnRNP complex, a ribonucleoprotein complex that contains small nuclear RNA (snRNA) U2 and a number of specific proteins. Part of the SF3B subcomplex of the 17S U2 SnRNP complex. SF3B associates with the splicing subcomplex SF3A and a 12S RNA unit to form the U2 small nuclear ribonucleoproteins complex (U2 snRNP). Within the SF3B complex interacts directly with SF3B1. Component of the minor spliceosome, which splices U12-type introns.

The protein localises to the nucleus. Component of the 17S U2 SnRNP complex of the spliceosome, a large ribonucleoprotein complex that removes introns from transcribed pre-mRNAs. The 17S U2 SnRNP complex (1) directly participates in early spliceosome assembly and (2) mediates recognition of the intron branch site during pre-mRNA splicing by promoting the selection of the pre-mRNA branch-site adenosine, the nucleophile for the first step of splicing. Within the 17S U2 SnRNP complex, SF3B6 is part of the SF3B subcomplex, which is required for 'A' complex assembly formed by the stable binding of U2 snRNP to the branchpoint sequence in pre-mRNA. Sequence independent binding of SF3A and SF3B subcomplexes upstream of the branch site is essential, it may anchor U2 snRNP to the pre-mRNA. Within the 17S U2 SnRNP complex, SF3B6 directly contacts the pre-mRNA branch site adenosine for the first catalytic step of splicing. SF3B6 stabilizes the intron branch site-U2 snRNA duplex, thereby promoting-binding of introns with poor sequence complementarity. Also acts as a component of the minor spliceosome, which is involved in the splicing of U12-type introns in pre-mRNAs. This Mus musculus (Mouse) protein is Splicing factor 3B subunit 6 (Sf3b6).